A 203-amino-acid chain; its full sequence is Large ribosomal subunit protein bL25 (203 aa).

The protein belongs to the bacterial ribosomal protein bL25 family. CTC subfamily. Part of the 50S ribosomal subunit; part of the 5S rRNA/L5/L18/L25 subcomplex. Contacts the 5S rRNA. Binds to the 5S rRNA independently of L5 and L18.

Its function is as follows. This is one of the proteins that binds to the 5S RNA in the ribosome where it forms part of the central protuberance. This chain is Large ribosomal subunit protein bL25, found in Cupriavidus pinatubonensis (strain JMP 134 / LMG 1197) (Cupriavidus necator (strain JMP 134)).